A 222-amino-acid polypeptide reads, in one-letter code: Thiamine-phosphate synthase (222 aa).

4-amino-2-methyl-5-(diphosphooxymethyl)pyrimidine is bound by residues 44-48 and Asn79; that span reads QFREK. Residues Asp80 and Asp99 each coordinate Mg(2+). Residue Ser117 coordinates 4-amino-2-methyl-5-(diphosphooxymethyl)pyrimidine. 143-145 is a 2-[(2R,5Z)-2-carboxy-4-methylthiazol-5(2H)-ylidene]ethyl phosphate binding site; it reads TET. Position 146 (Lys146) interacts with 4-amino-2-methyl-5-(diphosphooxymethyl)pyrimidine. 2-[(2R,5Z)-2-carboxy-4-methylthiazol-5(2H)-ylidene]ethyl phosphate-binding positions include Gly175 and 195-196; that span reads IS.

Belongs to the thiamine-phosphate synthase family. As to quaternary structure, monomer. Requires Mg(2+) as cofactor.

It carries out the reaction 2-[(2R,5Z)-2-carboxy-4-methylthiazol-5(2H)-ylidene]ethyl phosphate + 4-amino-2-methyl-5-(diphosphooxymethyl)pyrimidine + 2 H(+) = thiamine phosphate + CO2 + diphosphate. The enzyme catalyses 2-(2-carboxy-4-methylthiazol-5-yl)ethyl phosphate + 4-amino-2-methyl-5-(diphosphooxymethyl)pyrimidine + 2 H(+) = thiamine phosphate + CO2 + diphosphate. The catalysed reaction is 4-methyl-5-(2-phosphooxyethyl)-thiazole + 4-amino-2-methyl-5-(diphosphooxymethyl)pyrimidine + H(+) = thiamine phosphate + diphosphate. It functions in the pathway cofactor biosynthesis; thiamine diphosphate biosynthesis; thiamine phosphate from 4-amino-2-methyl-5-diphosphomethylpyrimidine and 4-methyl-5-(2-phosphoethyl)-thiazole: step 1/1. Condenses 4-methyl-5-(beta-hydroxyethyl)thiazole monophosphate (THZ-P) and 2-methyl-4-amino-5-hydroxymethyl pyrimidine pyrophosphate (HMP-PP) to form thiamine monophosphate (TMP). Is also able to use the 2-methoxy analog MeO-HMP-PP, as substrate in vitro, but not the 2-trifluoromethyl analog CF(3)-HMP-PP. This Bacillus subtilis (strain 168) protein is Thiamine-phosphate synthase (thiE).